Here is a 184-residue protein sequence, read N- to C-terminus: UPF0397 protein SAB2561c (184 aa).

A run of 5 helical transmembrane segments spans residues 11 to 31 (VVAIGIGAAVFVILGRFVVIP), 44 to 64 (AFLALISAIFGPFAGLMTGLV), 77 to 97 (AWWSWVICSGIIGCLYGWIGL), 111 to 131 (MIYFNIGQIIANIICWALIAP), and 148 to 168 (QGVISAVLNIISVGIIGTILL).

This sequence belongs to the UPF0397 family.

The protein localises to the cell membrane. The sequence is that of UPF0397 protein SAB2561c from Staphylococcus aureus (strain bovine RF122 / ET3-1).